A 550-amino-acid polypeptide reads, in one-letter code: uncharacterized protein (550 aa).

The signal sequence occupies residues Met-1–Arg-53. 2 N-linked (GlcNAc...) asparagine glycosylation sites follow: Asn-296 and Asn-518.

It is found in the endoplasmic reticulum. This is an uncharacterized protein from Schizosaccharomyces pombe (strain 972 / ATCC 24843) (Fission yeast).